We begin with the raw amino-acid sequence, 153 residues long: Large ribosomal subunit protein uL23m (153 aa).

The tract at residues 131-153 (MADEQQRQGSDPQRGGVPNWFSL) is disordered.

Belongs to the universal ribosomal protein uL23 family. Component of the mitochondrial ribosome large subunit (39S) which comprises a 16S rRNA and about 50 distinct proteins.

It is found in the mitochondrion. The protein is Large ribosomal subunit protein uL23m (MRPL23) of Otolemur garnettii (Small-eared galago).